A 497-amino-acid chain; its full sequence is 4,4'-diaponeurosporene oxygenase (497 aa).

FAD is bound at residue 7-19; that stretch reads VIGGGLGGISAAI.

The protein belongs to the carotenoid/retinoid oxidoreductase family. CrtP subfamily. The cofactor is FAD.

It catalyses the reaction all-trans-4,4'-diaponeurosporene + 2 AH2 + 2 O2 = 4,4'-diaponeurosporenal + 2 A + 3 H2O. Its pathway is carotenoid biosynthesis; staphyloxanthin biosynthesis; staphyloxanthin from farnesyl diphosphate: step 3/5. Functionally, involved in the biosynthesis of the yellow-orange carotenoid staphyloxanthin, which plays a role in the virulence via its protective function against oxidative stress. Catalyzes the oxidation of the terminal methyl side group of 4,4'-diaponeurosporene to form 4,4'-diaponeurosporen-4-al. The sequence is that of 4,4'-diaponeurosporene oxygenase from Staphylococcus aureus (strain MRSA252).